Consider the following 122-residue polypeptide: Large ribosomal subunit protein uL14 (122 aa).

The protein belongs to the universal ribosomal protein uL14 family. Part of the 50S ribosomal subunit. Forms a cluster with proteins L3 and L19. In the 70S ribosome, L14 and L19 interact and together make contacts with the 16S rRNA in bridges B5 and B8.

Its function is as follows. Binds to 23S rRNA. Forms part of two intersubunit bridges in the 70S ribosome. The polypeptide is Large ribosomal subunit protein uL14 (Mycoplasma capricolum subsp. capricolum (strain California kid / ATCC 27343 / NCTC 10154)).